Reading from the N-terminus, the 209-residue chain is Inner membrane protein YjdF (209 aa).

Topologically, residues 1-7 (MTRTLKP) are periplasmic. Residues 8 to 28 (LILNTSALTLTLILIYTGISA) form a helical membrane-spanning segment. The Cytoplasmic portion of the chain corresponds to 29 to 31 (HDK). The chain crosses the membrane as a helical span at residues 32-52 (LTWLMEVTPVIIVVQLLLATA). At 53-55 (RRY) the chain is on the periplasmic side. Residues 56–76 (PLTPLLYTLIFLHAIILMVGG) traverse the membrane as a helical segment. Residues 77–131 (QYTYAKVPVGFEVQEWLGLSRNPYDKLGHFFQGLVPALVAREILVRGMYVRGRKM) lie on the Cytoplasmic side of the membrane. Residues 132-152 (VAFLVCCVALAISAMYELIEW) traverse the membrane as a helical segment. The Periplasmic segment spans residues 153 to 177 (WAALAMGQGADDFLGTQGDQWDTQS). A helical membrane pass occupies residues 178-198 (DMFCALLGALTTVIFLARFHC). Residues 199–209 (RQLRRFGLITG) are Cytoplasmic-facing.

It is found in the cell inner membrane. The sequence is that of Inner membrane protein YjdF (yjdF) from Escherichia coli (strain K12).